The chain runs to 284 residues: MEMO1 family protein STK_20620 (284 aa).

Belongs to the MEMO1 family.

The protein is MEMO1 family protein STK_20620 of Sulfurisphaera tokodaii (strain DSM 16993 / JCM 10545 / NBRC 100140 / 7) (Sulfolobus tokodaii).